Here is a 189-residue protein sequence, read N- to C-terminus: High affinity copper uptake protein 1 (189 aa).

Over 1–67 (MDHSAHMGMS…AGLVINTAGE (67 aa)) the chain is Extracellular. Positions 13-18 (MGMSDM) match the Methionine segments (Mets) motif motif. The segment at 15–36 (MSDMNHSTTMPPSHHHPTSSGS) is disordered. Low complexity predominate over residues 20-36 (HSTTMPPSHHHPTSSGS). Residues 68–88 (MAGAFVAVFLLAMFYEGLKIA) traverse the membrane as a helical segment. The Cytoplasmic portion of the chain corresponds to 89–131 (REGLLRKSQVSIRYNSMPVPGPNGTILMETHKTVGQQMLSFPH). T113 bears the Phosphothreonine mark. The chain crosses the membrane as a helical span at residues 132–152 (LLQTVLHIIQVVISYFLMLIF). Residues 153–155 (MTY) lie on the Extracellular side of the membrane. Residues 156-176 (NGYLCIAVAAGAGTGYFLFSW) form a helical membrane-spanning segment. The Cytoplasmic portion of the chain corresponds to 177–189 (KKAVVVDITEHCH). C188 carries the post-translational modification Cysteine sulfenic acid (-SOH).

The protein belongs to the copper transporter (Ctr) (TC 1.A.56) family. SLC31A subfamily. Homotrimer; is stabilized by cisplatin via interactions between cisplatin and the methionine-rich clusters, and could be crucial for the copper(2+) reduction process and copper(1+) stabilization. Heterotrimer between SLC31A1, CCS and SOD1; this heterotrimer is copper(1+)-mediated and its maintenance is regulated through SOD1 activation. Interacts with KDR; this interaction is induced upon VEGFA stimulation leading to SLC31A1 and KDR subsequent co-internalization to early endosomes, thereby activating KDR downstream signaling in endothelial cells. Interacts (via C-terminal domain) with ATOX1 (via dimer form); this interaction improves ATOX1 stability and controls intracellular copper(1+) levels. Interacts with SLC31A2; this interaction stabilizes SLC31A2 and protects its from ubiquitination and degradation. Interacts (via C-terminal domain) with CCS; this interaction is copper(1+)-mediated. In terms of processing, proteolytic cleavage, leading to a truncated form, is facilitated by SLC31A2 and initiated preferentially by CTSL and to a minor extend by CTSB in endolysosomal compartments. A post-CTSL/cathepsin L processing occurs to yield to the fully truncated form. Sulfenylated at Cys-188 after stimulation with VEGFA, which induces SLC31A1-KDR disulfide bond formation and their co-internalization to early endosomes, driving to a sustained VEGFR2 signaling.

It localises to the cell membrane. It is found in the early endosome membrane. The protein resides in the recycling endosome membrane. Its subcellular location is the apical cell membrane. The protein localises to the late endosome membrane. It localises to the basolateral cell membrane. It catalyses the reaction Ag(+)(out) = Ag(+)(in). It carries out the reaction Cu(+)(out) = Cu(+)(in). Its function is as follows. Uniporter that mediates the transport of copper(1+) from the extracellular space to the cytoplasm, across the plasma membrane and delivers directly copper(1+) to specific chaperone such as ATOX1, via a copper(1+)- mediated transient interaction between the C-terminal domain and a copper(1+) chaperone, thus controlling intracellular copper(1+) levels. May function in copper(1+) import from the apical membrane thus may drive intestinal copper absorption. The copper(1+) transport mechanism is sodium-independent, saturable and of high-affinity. Also mediates the uptake of silver(1+). May function in the influx of the platinum-containing chemotherapeutic agents. The platinum-containing chemotherapeutic agents uptake is saturable. In vitro, mediates the transport of cadmium(2+) into cells. Also participates in the first step of copper(2+) acquisition by cells through a direct transfer of copper(2+) from copper(2+) carriers in blood, such as ALB to the N-terminal domain of SLC31A1, leading to copper(2+) reduction and probably followed by copper(1+) stabilization. In addition, functions as a redox sensor to promote angiogenesis in endothelial cells, in a copper(1+) transport independent manner, by transmitting the VEGF-induced ROS signal through a sulfenylation at Cys-189 leadin g to a subsequent disulfide bond formation between SLC31A1 and KDR. The SLC31A1-KDR complex is then co-internalized to early endosomes, driving a sustained VEGFR2 signaling. Functionally, mobilizes copper(1+) out of the endosomal compartment, making copper(1+) available for export out of the cells. This is High affinity copper uptake protein 1 from Sus scrofa (Pig).